An 880-amino-acid chain; its full sequence is Valine--tRNA ligase (880 aa).

A 'HIGH' region motif is present at residues 49 to 59 (PNVTGKLHLGH). Positions 525-529 (KMSKS) match the 'KMSKS' region motif. Residue Lys528 coordinates ATP. The stretch at 809 to 879 (LAGLLDLEEE…AVRARIKELK (71 aa)) forms a coiled coil.

This sequence belongs to the class-I aminoacyl-tRNA synthetase family. ValS type 1 subfamily. As to quaternary structure, monomer.

The protein localises to the cytoplasm. The catalysed reaction is tRNA(Val) + L-valine + ATP = L-valyl-tRNA(Val) + AMP + diphosphate. Catalyzes the attachment of valine to tRNA(Val). As ValRS can inadvertently accommodate and process structurally similar amino acids such as threonine, to avoid such errors, it has a 'posttransfer' editing activity that hydrolyzes mischarged Thr-tRNA(Val) in a tRNA-dependent manner. This Halalkalibacterium halodurans (strain ATCC BAA-125 / DSM 18197 / FERM 7344 / JCM 9153 / C-125) (Bacillus halodurans) protein is Valine--tRNA ligase.